Consider the following 673-residue polypeptide: Paralemmin-3 (673 aa).

Coiled coils occupy residues 4–49 (SSLY…LRER) and 75–101 (GQAQ…LQSA). 2 disordered regions span residues 49 to 78 (RWLM…GQAQ) and 99 to 213 (QSAS…GEAK). Polar residues predominate over residues 123–137 (LSQSIVEAGSVGQTD). 2 positions are modified to phosphoserine: Ser-124 and Ser-143. At Thr-151 the chain carries Phosphothreonine. Phosphoserine is present on residues Ser-155, Ser-157, and Ser-260. 2 disordered regions span residues 295–343 (VPEV…SFIW) and 356–673 (LLVE…CAVM). The residue at position 301 (Thr-301) is a Phosphothreonine. Position 325 is a phosphoserine (Ser-325). Over residues 327–338 (EGDGQGGSGGEE) the composition is skewed to gly residues. Ser-375 and Ser-420 each carry phosphoserine. Composition is skewed to basic and acidic residues over residues 392-477 (EAEK…KRGA) and 487-532 (GVEK…EKTQ). Phosphoserine occurs at positions 544 and 660. Residues Cys-667 and Cys-669 are each lipidated (S-palmitoyl cysteine). Cysteine methyl ester is present on Cys-670. Residue Cys-670 is the site of S-farnesyl cysteine attachment. Positions 671-673 (AVM) are cleaved as a propeptide — removed in mature form.

This sequence belongs to the paralemmin family. In terms of assembly, interacts with SIGIRR. Post-translationally, palmitoylated on Cys-667 and Cys-669 and prenylated on Cys-670; which is required for membrane association.

The protein resides in the cytoplasm. The protein localises to the cell membrane. Functionally, ATP-binding protein, which may act as a adapter in the Toll-like receptor (TLR) signaling. The polypeptide is Paralemmin-3 (PALM3) (Homo sapiens (Human)).